Consider the following 241-residue polypeptide: MSDKNPQYSRILLKLSGEALAGGLGMGIDTSVLDKMSLAIAHLCGLGVQVGIVVGGGNLYRGSQLQKEGLVGRVTGDQMGMLATVMNGLAMRDALERRNINTRLMSALPIGEVTESYSSRNAIRYLKNGDVCIFVAGTGNPFFTTDTAACLRGIEIEAGVILKATKVDGVYDKDPSEHADAKKYDALTFDEVLEQKLGVMDLTAIALCREHNVPLQVFDMNKPNSLLNVIMGENEGTRVFH.

Residue 14–17 participates in ATP binding; that stretch reads KLSG. Positions 22–27 are involved in allosteric activation by GTP; that stretch reads GGLGMG. G56 provides a ligand contact to UMP. G57 and R61 together coordinate ATP. Residues D77 and 138-145 each bind UMP; that span reads TGNPFFTT. Residues T165, Y171, and D174 each coordinate ATP.

Belongs to the UMP kinase family. Homohexamer.

The protein localises to the cytoplasm. It carries out the reaction UMP + ATP = UDP + ADP. The protein operates within pyrimidine metabolism; CTP biosynthesis via de novo pathway; UDP from UMP (UMPK route): step 1/1. Allosterically activated by GTP. Inhibited by UTP. In terms of biological role, catalyzes the reversible phosphorylation of UMP to UDP. This is Uridylate kinase from Psychrobacter sp. (strain PRwf-1).